A 349-amino-acid chain; its full sequence is Glycerol-3-phosphate dehydrogenase [NAD(P)+] (349 aa).

Positions 12, 13, and 107 each coordinate NADPH. The sn-glycerol 3-phosphate site is built by Lys-107, Gly-138, and Ser-140. Residue Ala-142 coordinates NADPH. Positions 193, 246, 256, 257, and 258 each coordinate sn-glycerol 3-phosphate. Lys-193 functions as the Proton acceptor in the catalytic mechanism. Arg-257 lines the NADPH pocket. NADPH-binding residues include Val-281 and Glu-283.

The protein belongs to the NAD-dependent glycerol-3-phosphate dehydrogenase family.

It localises to the cytoplasm. It carries out the reaction sn-glycerol 3-phosphate + NAD(+) = dihydroxyacetone phosphate + NADH + H(+). It catalyses the reaction sn-glycerol 3-phosphate + NADP(+) = dihydroxyacetone phosphate + NADPH + H(+). The protein operates within membrane lipid metabolism; glycerophospholipid metabolism. Its function is as follows. Catalyzes the reduction of the glycolytic intermediate dihydroxyacetone phosphate (DHAP) to sn-glycerol 3-phosphate (G3P), the key precursor for phospholipid synthesis. This chain is Glycerol-3-phosphate dehydrogenase [NAD(P)+], found in Pelotomaculum thermopropionicum (strain DSM 13744 / JCM 10971 / SI).